Reading from the N-terminus, the 739-residue chain is NAD(P)H-quinone oxidoreductase subunit 5, chloroplastic (739 aa).

A run of 16 helical transmembrane segments spans residues 9–29, 39–59, 89–109, 125–145, 147–167, 185–205, 219–239, 258–278, 280–300, 327–347, 354–374, 396–416, 425–445, 542–562, 610–630, and 719–739; these read WVIP…LILI, IWAF…VQLS, IDPL…LVLI, FVYI…SNLI, IYFF…FWFT, GDFG…SLEF, NGVN…GAVA, TPIS…FLLA, LLPL…VGTI, LGYM…FHLI, ALLF…VGYS, TTFL…CFWS, WLYS…TAFY, LFPL…GISF, TLAI…YSFF, and ISSY…FFLS.

It belongs to the complex I subunit 5 family. As to quaternary structure, NDH is composed of at least 16 different subunits, 5 of which are encoded in the nucleus.

The protein resides in the plastid. Its subcellular location is the chloroplast thylakoid membrane. The enzyme catalyses a plastoquinone + NADH + (n+1) H(+)(in) = a plastoquinol + NAD(+) + n H(+)(out). It catalyses the reaction a plastoquinone + NADPH + (n+1) H(+)(in) = a plastoquinol + NADP(+) + n H(+)(out). Its function is as follows. NDH shuttles electrons from NAD(P)H:plastoquinone, via FMN and iron-sulfur (Fe-S) centers, to quinones in the photosynthetic chain and possibly in a chloroplast respiratory chain. The immediate electron acceptor for the enzyme in this species is believed to be plastoquinone. Couples the redox reaction to proton translocation, and thus conserves the redox energy in a proton gradient. This Triticum aestivum (Wheat) protein is NAD(P)H-quinone oxidoreductase subunit 5, chloroplastic (ndhF).